Reading from the N-terminus, the 135-residue chain is Thioredoxin H5 (135 aa).

In terms of domain architecture, Thioredoxin spans Glu-13–Arg-128. Active-site nucleophile residues include Cys-54 and Cys-57. Cys-54 and Cys-57 are oxidised to a cystine.

This sequence belongs to the thioredoxin family. Plant H-type subfamily.

The protein resides in the cytoplasm. In terms of biological role, probable thiol-disulfide oxidoreductase that may be involved in the redox regulation of a number of cytosolic enzymes. This chain is Thioredoxin H5, found in Oryza sativa subsp. japonica (Rice).